Here is a 246-residue protein sequence, read N- to C-terminus: tRNA (guanine-N(1)-)-methyltransferase (246 aa).

Gly-114 contacts S-adenosyl-L-methionine.

This sequence belongs to the RNA methyltransferase TrmD family. Homodimer.

Its subcellular location is the cytoplasm. The enzyme catalyses guanosine(37) in tRNA + S-adenosyl-L-methionine = N(1)-methylguanosine(37) in tRNA + S-adenosyl-L-homocysteine + H(+). Functionally, specifically methylates guanosine-37 in various tRNAs. The chain is tRNA (guanine-N(1)-)-methyltransferase from Novosphingobium aromaticivorans (strain ATCC 700278 / DSM 12444 / CCUG 56034 / CIP 105152 / NBRC 16084 / F199).